The primary structure comprises 206 residues: Putative 3-methyladenine DNA glycosylase (206 aa).

Belongs to the DNA glycosylase MPG family.

The chain is Putative 3-methyladenine DNA glycosylase from Salinibacter ruber (strain DSM 13855 / M31).